Here is a 606-residue protein sequence, read N- to C-terminus: NADH-ubiquinone oxidoreductase chain 5 (606 aa).

Transmembrane regions (helical) follow at residues 1–21 (MNLF…PIMM), 35–55 (YVKN…MVYL), 87–107 (LMFM…SMWY), 114–134 (INQF…LVTA), 140–160 (LFIG…WWFG), 171–191 (AILY…WFLS), 211–233 (FPLM…HPWL), 241–261 (TPVS…FLLV), 272–292 (LIQT…AICA), 301–320 (IIAF…IGLN), 325–347 (AFLH…GSII), 366–386 (LPFT…MPFL), 413–433 (LIAT…ALLG), 457–477 (LLVG…PMTT), 482–502 (MPLH…IIAF), and 582–602 (GLIK…MILF).

Belongs to the complex I subunit 5 family. As to quaternary structure, core subunit of respiratory chain NADH dehydrogenase (Complex I) which is composed of 45 different subunits.

The protein localises to the mitochondrion inner membrane. It carries out the reaction a ubiquinone + NADH + 5 H(+)(in) = a ubiquinol + NAD(+) + 4 H(+)(out). Its function is as follows. Core subunit of the mitochondrial membrane respiratory chain NADH dehydrogenase (Complex I) which catalyzes electron transfer from NADH through the respiratory chain, using ubiquinone as an electron acceptor. Essential for the catalytic activity and assembly of complex I. The sequence is that of NADH-ubiquinone oxidoreductase chain 5 (MT-ND5) from Balaenoptera physalus (Fin whale).